The sequence spans 1249 residues: ATP-dependent helicase/nuclease subunit A (1249 aa).

The region spanning 5–482 is the UvrD-like helicase ATP-binding domain; the sequence is TNYTPSQQAV…IVLAENFRSV (478 aa). Residue 26-33 coordinates ATP; it reads ASAGSGKT. In terms of domain architecture, UvrD-like helicase C-terminal spans 521-811; that stretch reads ADMPQTTNLL…NVMTIHGSKG (291 aa).

The protein belongs to the helicase family. AddA subfamily. As to quaternary structure, heterodimer of AddA and AddB/RexB. Mg(2+) is required as a cofactor.

The catalysed reaction is Couples ATP hydrolysis with the unwinding of duplex DNA by translocating in the 3'-5' direction.. The enzyme catalyses ATP + H2O = ADP + phosphate + H(+). In terms of biological role, the heterodimer acts as both an ATP-dependent DNA helicase and an ATP-dependent, dual-direction single-stranded exonuclease. Recognizes the chi site generating a DNA molecule suitable for the initiation of homologous recombination. The AddA nuclease domain is required for chi fragment generation; this subunit has the helicase and 3' -&gt; 5' nuclease activities. The sequence is that of ATP-dependent helicase/nuclease subunit A from Lactiplantibacillus plantarum (strain ATCC BAA-793 / NCIMB 8826 / WCFS1) (Lactobacillus plantarum).